We begin with the raw amino-acid sequence, 378 residues long: UDP-N-acetylglucosamine--N-acetylmuramyl-(pentapeptide) pyrophosphoryl-undecaprenol N-acetylglucosamine transferase (378 aa).

Residues 14–16 (TGG), asparagine 125, arginine 165, serine 193, and glutamine 293 each bind UDP-N-acetyl-alpha-D-glucosamine.

It belongs to the glycosyltransferase 28 family. MurG subfamily.

It is found in the cell inner membrane. It catalyses the reaction di-trans,octa-cis-undecaprenyl diphospho-N-acetyl-alpha-D-muramoyl-L-alanyl-D-glutamyl-meso-2,6-diaminopimeloyl-D-alanyl-D-alanine + UDP-N-acetyl-alpha-D-glucosamine = di-trans,octa-cis-undecaprenyl diphospho-[N-acetyl-alpha-D-glucosaminyl-(1-&gt;4)]-N-acetyl-alpha-D-muramoyl-L-alanyl-D-glutamyl-meso-2,6-diaminopimeloyl-D-alanyl-D-alanine + UDP + H(+). It functions in the pathway cell wall biogenesis; peptidoglycan biosynthesis. Cell wall formation. Catalyzes the transfer of a GlcNAc subunit on undecaprenyl-pyrophosphoryl-MurNAc-pentapeptide (lipid intermediate I) to form undecaprenyl-pyrophosphoryl-MurNAc-(pentapeptide)GlcNAc (lipid intermediate II). The polypeptide is UDP-N-acetylglucosamine--N-acetylmuramyl-(pentapeptide) pyrophosphoryl-undecaprenol N-acetylglucosamine transferase (Bartonella henselae (strain ATCC 49882 / DSM 28221 / CCUG 30454 / Houston 1) (Rochalimaea henselae)).